Here is a 296-residue protein sequence, read N- to C-terminus: Ribosomal RNA small subunit methyltransferase H (296 aa).

S-adenosyl-L-methionine is bound by residues 30–32, Asp-49, Phe-76, Asp-97, and Gln-104; that span reads GGH.

It belongs to the methyltransferase superfamily. RsmH family.

Its subcellular location is the cytoplasm. The catalysed reaction is cytidine(1402) in 16S rRNA + S-adenosyl-L-methionine = N(4)-methylcytidine(1402) in 16S rRNA + S-adenosyl-L-homocysteine + H(+). Its function is as follows. Specifically methylates the N4 position of cytidine in position 1402 (C1402) of 16S rRNA. In Mesomycoplasma hyopneumoniae (strain 232) (Mycoplasma hyopneumoniae), this protein is Ribosomal RNA small subunit methyltransferase H.